The following is a 303-amino-acid chain: MWFKNLTVYRFNKPFSVDTESMEKSLEDFTFSPCSSQDISKFGFSNAFGKHGDTLVHTAADRHLICATKEEKILPAQVIKEALEEKVALLESEDGRKLAKKEKDALKDEITTTLLPRAFSRRSQIRALILPEIQMILVDSSSAAKSEELMALLRKAIGTLPIIPMSFKTPIETQLTEWLKESKTPAPFEMQDEAELKSDSDEGGIVRFKQQDLSENEVLAHIEVGKQVHKLALHFGQSVAFLLQSDAAIKRLKFSEEFRAGNDDLGNEDPMARLDADFALMGSELIALVNAVVEALGGLEDSI.

The protein belongs to the RdgC family.

Its subcellular location is the cytoplasm. The protein resides in the nucleoid. In terms of biological role, may be involved in recombination. The sequence is that of Recombination-associated protein RdgC from Shewanella piezotolerans (strain WP3 / JCM 13877).